We begin with the raw amino-acid sequence, 75 residues long: Anionic peptide (75 aa).

The first 24 residues, Met-1–Ala-24, serve as a signal peptide directing secretion.

This sequence belongs to the non-disulfide-bridged peptide (NDBP) superfamily. As to expression, expressed by the venom gland.

The protein resides in the secreted. The protein is Anionic peptide of Tityus discrepans (Venezuelan scorpion).